The primary structure comprises 208 residues: Pyridoxine/pyridoxamine 5'-phosphate oxidase (208 aa).

Residues 53 to 58 (RTVLLK), 68 to 69 (YS), Lys-75, and Gln-100 each bind FMN. Lys-58 contacts substrate. Tyr-118, Arg-122, and Ser-126 together coordinate substrate. Residues 135–136 (QS) and Trp-180 contribute to the FMN site. 186-188 (RLH) contributes to the substrate binding site. Residue Arg-190 participates in FMN binding.

This sequence belongs to the pyridoxamine 5'-phosphate oxidase family. As to quaternary structure, homodimer. The cofactor is FMN.

It catalyses the reaction pyridoxamine 5'-phosphate + O2 + H2O = pyridoxal 5'-phosphate + H2O2 + NH4(+). It carries out the reaction pyridoxine 5'-phosphate + O2 = pyridoxal 5'-phosphate + H2O2. It participates in cofactor metabolism; pyridoxal 5'-phosphate salvage; pyridoxal 5'-phosphate from pyridoxamine 5'-phosphate: step 1/1. The protein operates within cofactor metabolism; pyridoxal 5'-phosphate salvage; pyridoxal 5'-phosphate from pyridoxine 5'-phosphate: step 1/1. Its function is as follows. Catalyzes the oxidation of either pyridoxine 5'-phosphate (PNP) or pyridoxamine 5'-phosphate (PMP) into pyridoxal 5'-phosphate (PLP). The sequence is that of Pyridoxine/pyridoxamine 5'-phosphate oxidase from Xylella fastidiosa (strain 9a5c).